The sequence spans 211 residues: HTH-type transcriptional repressor FabR (211 aa).

The HTH tetR-type domain maps to 10–70 (RTRRSLVEAA…TMVDESGLML (61 aa)). The segment at residues 33 to 52 (SLREVAREAGIAPTSFYRHF) is a DNA-binding region (H-T-H motif).

Homodimer.

Its subcellular location is the cytoplasm. Its function is as follows. Represses the transcription of fabB, involved in unsaturated fatty acid (UFA) biosynthesis. By controlling UFA production, FabR directly influences the physical properties of the membrane bilayer. The polypeptide is HTH-type transcriptional repressor FabR (Cronobacter sakazakii (strain ATCC BAA-894) (Enterobacter sakazakii)).